The chain runs to 305 residues: Protoheme IX farnesyltransferase 2 (305 aa).

8 helical membrane passes run 31-51 (VVMLLLLTALVGMCLASETWI), 53-73 (WKILLAGLTGIGFLSSAAAVI), 103-123 (ALVFAGVLTVVGYLILELWVN), 125-145 (LTALLTLASLVGYAFIYTMYL), 152-172 (NIVIGGLAGAAPPLLGWTAVT), 179-199 (ALLLVLIIFIWTPPHFWALAI), 231-251 (VLLALISVLPYLIGMTGAIYL), and 277-297 (AMKTFKFSIIHLMVLFVVLLV).

Belongs to the UbiA prenyltransferase family. Protoheme IX farnesyltransferase subfamily.

It is found in the cell inner membrane. It carries out the reaction heme b + (2E,6E)-farnesyl diphosphate + H2O = Fe(II)-heme o + diphosphate. It participates in porphyrin-containing compound metabolism; heme O biosynthesis; heme O from protoheme: step 1/1. Converts heme B (protoheme IX) to heme O by substitution of the vinyl group on carbon 2 of heme B porphyrin ring with a hydroxyethyl farnesyl side group. The chain is Protoheme IX farnesyltransferase 2 from Pseudoalteromonas atlantica (strain T6c / ATCC BAA-1087).